The chain runs to 255 residues: Endonuclease 8 2 (255 aa).

Pro2 (schiff-base intermediate with DNA) is an active-site residue. The active-site Proton donor is Glu3. Lys51 functions as the Proton donor; for beta-elimination activity in the catalytic mechanism. DNA is bound by residues Gln67 and Asn164. An FPG-type zinc finger spans residues 221–255; that stretch reads WVYGRAGQGCRRCGTLIAYDTTDERVRYWCPACQR. The Proton donor; for delta-elimination activity role is filled by Arg245.

This sequence belongs to the FPG family. Zn(2+) is required as a cofactor.

It catalyses the reaction 2'-deoxyribonucleotide-(2'-deoxyribose 5'-phosphate)-2'-deoxyribonucleotide-DNA = a 3'-end 2'-deoxyribonucleotide-(2,3-dehydro-2,3-deoxyribose 5'-phosphate)-DNA + a 5'-end 5'-phospho-2'-deoxyribonucleoside-DNA + H(+). Functionally, involved in base excision repair of DNA damaged by oxidation or by mutagenic agents. Acts as a DNA glycosylase that recognizes and removes damaged bases. Has AP (apurinic/apyrimidinic) lyase activity and introduces nicks in the DNA strand. Cleaves the DNA backbone by beta-delta elimination to generate a single-strand break at the site of the removed base with both 3'- and 5'-phosphates. In Mycobacterium bovis (strain ATCC BAA-935 / AF2122/97), this protein is Endonuclease 8 2 (nei2).